The primary structure comprises 99 residues: Protein S100-A11 (99 aa).

Met-1 is subject to N-acetylmethionine. At Thr-8 the chain carries Phosphothreonine. EF-hand domains lie at 10 to 47 and 53 to 88; these read RCIE…ELAA and KDPG…LAIA. Residues Asn-29, Lys-31, Glu-36, Asp-66, Asp-68, Asp-70, Gln-72, and Glu-77 each coordinate Ca(2+).

The protein belongs to the S-100 family. In terms of assembly, homodimer; disulfide-linked. Post-translationally, phosphorylation at Thr-8 significantly suppresses homodimerization and promotes association with NCL/nucleolin which induces nuclear translocation.

Its subcellular location is the cytoplasm. It is found in the nucleus. In terms of biological role, facilitates the differentiation and the cornification of keratinocytes. The protein is Protein S100-A11 (S100A11) of Sus scrofa (Pig).